The primary structure comprises 846 residues: Disrupted in schizophrenia 1 homolog (846 aa).

Disordered regions lie at residues 1 to 53, 127 to 147, 231 to 257, 277 to 312, and 409 to 436; these read MQGA…IGFL, HSGV…GDSG, EAEP…GEPR, TRSN…QDGG, and LHGA…AQDS. An interaction with MAP1A region spans residues 1–288; the sequence is MQGAGSRGAW…SNRQPECGMV (288 aa). Basic and acidic residues-rich tracts occupy residues 133–143 and 248–257; these read GNDRRQSERLT and GSDRPHGEPR. Residues 277-300 show a composition bias toward polar residues; it reads TRSNRQPECGMVSSSDAGFSSQDA. The interval 289–686 is interaction with TRAF3IP1; the sequence is SSSDAGFSSQ…LERVWKADLE (398 aa). The interval 429–587 is required for localization to punctate cytoplasmic foci; that stretch reads RRTTAQDSLP…LLEAKMLALS (159 aa). Residues 435–846 are necessary and sufficient for interaction with PCNT and localization at the centrosome; that stretch reads DSLPGLAVTR…STAGAQEAED (412 aa). Residues 440 to 489 adopt a coiled-coil conformation; it reads LAVTRRDWLMREKEQLQKEIEALRARVSVLEAKEQRLSQELEDQEMLLRW. Positions 588 to 846 are interaction with ATF4 and ATF5; sequence GSCFSTAKEL…STAGAQEAED (259 aa). The segment at 721–846 is interaction with NDEL1 and PAFAH1B1; the sequence is TAALAVPRTP…STAGAQEAED (126 aa). Positions 721 to 846 are interaction with PAFAH1B1; sequence TAALAVPRTP…STAGAQEAED (126 aa). Residues 795–828 are interaction with NDEL1; sequence GHDEALFQSLQGELQMVKETLQTMFLQLQPAKEA.

Interacts with NDEL1. Interacts with CCDC88A (via C-terminus); the interaction is direct. Interacts with GSK3B. Interacts with tubulin alpha, ACTN2, ANKHD1, ATF4, ATF5, CEP63, EIF3S3, MAP1A, NDEL1, PAFAH1B1, RANBP9, SPTBN4, SYNE1 and TRAF3IP1. Interaction with microtubules may be mediated in part by TRAF3IP1. Interacts (via C-terminal) with PCNT. Interacts with CHCHD6. Interacts with CCDC141. Interacts with FBXW7, the substrate-recognition component of a SCF (SKP1-CUL1-F-box protein) E3 ubiquitin-protein ligase complex; the interaction targets DISC1 for proteasomal degradation. Interacts with ZNF365. Interacts with ATF4; inhibiting ATF4 transcription factor activity by disrupting ATF4 dimerization and DNA-binding. Interacts with PDE4B. Post-translationally, ubiquitinated. Ubiquitination with 'Lys-48'-linked polyubiquitin chains leads to its proteasomal degradation. Expressed in brain, heart, kidney, liver and thymus. Within the brain expression is high in the cerebral cortex, hippocampus and olfactory bulb and is also seen at lower levels in the cerebellum (at protein level).

The protein localises to the cytoplasm. Its subcellular location is the cytoskeleton. The protein resides in the mitochondrion. It is found in the microtubule organizing center. It localises to the centrosome. The protein localises to the postsynaptic density. In terms of biological role, involved in the regulation of multiple aspects of embryonic and adult neurogenesis. Required for neural progenitor proliferation in the ventrical/subventrical zone during embryonic brain development and in the adult dentate gyrus of the hippocampus. Participates in the Wnt-mediated neural progenitor proliferation as a positive regulator by modulating GSK3B activity and CTNNB1 abundance. Plays a role as a modulator of the AKT-mTOR signaling pathway controlling the tempo of the process of newborn neurons integration during adult neurogenesis, including neuron positioning, dendritic development and synapse formation. Inhibits the activation of AKT-mTOR signaling upon interaction with CCDC88A. Regulates the migration of early-born granule cell precursors toward the dentate gyrus during the hippocampal development. Inhibits ATF4 transcription factor activity in neurons by disrupting ATF4 dimerization and DNA-binding. Plays a role, together with PCNT, in the microtubule network formation. The sequence is that of Disrupted in schizophrenia 1 homolog from Rattus norvegicus (Rat).